Reading from the N-terminus, the 225-residue chain is Ribose-5-phosphate isomerase A (225 aa).

Residues 33–36, 84–87, and 96–99 each bind substrate; these read TGST, DGAD, and KGGG. The Proton acceptor role is filled by Glu-105. Lys-123 contributes to the substrate binding site.

Belongs to the ribose 5-phosphate isomerase family. In terms of assembly, homodimer.

It catalyses the reaction aldehydo-D-ribose 5-phosphate = D-ribulose 5-phosphate. The protein operates within carbohydrate degradation; pentose phosphate pathway; D-ribose 5-phosphate from D-ribulose 5-phosphate (non-oxidative stage): step 1/1. In terms of biological role, catalyzes the reversible conversion of ribose-5-phosphate to ribulose 5-phosphate. This is Ribose-5-phosphate isomerase A from Halobacterium salinarum (strain ATCC 29341 / DSM 671 / R1).